A 205-amino-acid polypeptide reads, in one-letter code: Disintegrin-like leberagin-C (205 aa).

Residues 4–90 (PPVCGNELLE…DCPIDRFHRN (87 aa)) enclose the Disintegrin domain. Disulfide bonds link C7–C26, C18–C36, C62–C82, C69–C94, C101–C106, C113–C128, C151–C158, C163–C171, and C193–C198. The D/ECD-tripeptide signature appears at 68 to 70 (ECD). The N-linked (GlcNAc...) asparagine glycan is linked to N120.

The protein belongs to the venom metalloproteinase (M12B) family. P-III subfamily. P-IIIb sub-subfamily. In terms of assembly, monomer. In terms of tissue distribution, expressed by the venom gland.

The protein localises to the secreted. In terms of biological role, inhibits platelet aggregation induced by thrombin and arachidonic acid with IC(50) of 40 and 50 nM respectively (in rabbit platetelet-rich plasma). It also inhibits the adhesion of melanoma tumor cells on fibrinogen and fibronectin, by interfering with the function of alpha-V/beta-3 (ITGAV/ITGB3) and, to a lesser extent, with alpha-V/beta-6 (ITGAV/ITGB6) and alpha-5/beta-1 (ITGA5/ITGB1) integrins. The polypeptide is Disintegrin-like leberagin-C (Macrovipera lebetina transmediterranea (Blunt-nosed viper)).